The primary structure comprises 355 residues: Ubiquinone biosynthesis protein COQ4 homolog, mitochondrial (355 aa).

Zn(2+) contacts are provided by His-134, Asp-135, His-138, and Glu-150.

The protein belongs to the COQ4 family. In terms of assembly, component of a multi-subunit COQ enzyme complex. Requires Zn(2+) as cofactor.

The protein resides in the mitochondrion inner membrane. It catalyses the reaction a 4-hydroxy-3-methoxy-5-(all-trans-polyprenyl)benzoate + H(+) = a 2-methoxy-6-(all-trans-polyprenyl)phenol + CO2. The protein operates within cofactor biosynthesis; ubiquinone biosynthesis. Functionally, lyase that catalyzes the C1-decarboxylation of 4-hydroxy-3-methoxy-5-(all-trans-polyprenyl)benzoic acid into 2-methoxy-6-(all-trans-polyprenyl)phenol during ubiquinone biosynthesis. The chain is Ubiquinone biosynthesis protein COQ4 homolog, mitochondrial from Plasmodium knowlesi (strain H).